The primary structure comprises 187 residues: UPF0301 protein Cpar_0662 (187 aa).

Belongs to the UPF0301 (AlgH) family.

This Chlorobaculum parvum (strain DSM 263 / NCIMB 8327) (Chlorobium vibrioforme subsp. thiosulfatophilum) protein is UPF0301 protein Cpar_0662.